The chain runs to 320 residues: Cytochrome f (320 aa).

An N-terminal signal peptide occupies residues 1–35; that stretch reads MQNRNTFSWVKEQMTRSISVSIIIYVITRTSISNA. Heme is bound by residues Y36, C56, C59, and H60. Residues 286–306 form a helical membrane-spanning segment; that stretch reads VQGLLFFLASIILAQIFLVLK.

Belongs to the cytochrome f family. The 4 large subunits of the cytochrome b6-f complex are cytochrome b6, subunit IV (17 kDa polypeptide, petD), cytochrome f and the Rieske protein, while the 4 small subunits are PetG, PetL, PetM and PetN. The complex functions as a dimer. Requires heme as cofactor.

Its subcellular location is the plastid. The protein localises to the chloroplast thylakoid membrane. Functionally, component of the cytochrome b6-f complex, which mediates electron transfer between photosystem II (PSII) and photosystem I (PSI), cyclic electron flow around PSI, and state transitions. In Chloranthus spicatus (Chulantree), this protein is Cytochrome f.